Here is a 680-residue protein sequence, read N- to C-terminus: Probable ATP-dependent RNA helicase pitchoune (680 aa).

The interval Met-1–Phe-168 is disordered. Residues Lys-29 to Asn-42 are compositionally biased toward polar residues. Residues Asp-59 to Gln-69 are compositionally biased toward acidic residues. Positions Pro-74–Pro-83 are enriched in basic residues. Over residues Ser-95 to Pro-141 the composition is skewed to acidic residues. Residues Phe-187 to Ser-215 carry the Q motif motif. One can recognise a Helicase ATP-binding domain in the interval Leu-218–Tyr-393. Ala-231–Thr-238 serves as a coordination point for ATP. The DEVD box signature appears at Asp-341–Asp-344. Positions Gly-407–Ile-577 constitute a Helicase C-terminal domain. The disordered stretch occupies residues Gly-659–Arg-680. A compositionally biased stretch (basic and acidic residues) spans Val-670 to Arg-680.

Belongs to the DEAD box helicase family. DDX18/HAS1 subfamily.

The protein localises to the nucleus. It localises to the nucleolus. The catalysed reaction is ATP + H2O = ADP + phosphate + H(+). Probable RNA-dependent helicase. Functions in cell growth and proliferation. May have a role in ribosome biogenesis and, consequently, in protein biosynthesis. This is Probable ATP-dependent RNA helicase pitchoune (pit) from Drosophila melanogaster (Fruit fly).